Reading from the N-terminus, the 832-residue chain is SID1 transmembrane family member 2 (832 aa).

An N-terminal signal peptide occupies residues Met-1–Ala-15. The Extracellular portion of the chain corresponds to Val-16–Tyr-293. 6 N-linked (GlcNAc...) asparagine glycosylation sites follow: Asn-27, Asn-54, Asn-60, Asn-123, Asn-141, and Asn-165. A helical transmembrane segment spans residues Val-294–Leu-314. Topologically, residues Ala-315–Gln-447 are cytoplasmic. Residues Ser-401, Ser-403, and Ser-404 each carry the phosphoserine modification. A helical transmembrane segment spans residues Ile-448–Val-468. Residues Ile-469–Ala-499 are Extracellular-facing. Residues Asn-476 and Asn-496 are each glycosylated (N-linked (GlcNAc...) asparagine). A helical transmembrane segment spans residues Phe-500–Ile-520. The Cytoplasmic portion of the chain corresponds to Leu-521–His-546. Residues Phe-547–Tyr-567 traverse the membrane as a helical segment. Residues His-568 to Ser-605 are Extracellular-facing. N-linked (GlcNAc...) asparagine glycosylation is found at Asn-572 and Asn-603. The helical transmembrane segment at Ala-606–Phe-626 threads the bilayer. Topologically, residues Gly-627–Thr-631 are cytoplasmic. Residues Ala-632–Leu-652 traverse the membrane as a helical segment. Over Tyr-653–Arg-688 the chain is Extracellular. Residues Met-689–Met-709 form a helical membrane-spanning segment. At Arg-710–Ala-715 the chain is on the cytoplasmic side. The chain crosses the membrane as a helical span at residues Ser-716 to Met-736. Residues Lys-737–Leu-746 are Extracellular-facing. A helical membrane pass occupies residues Ile-747 to Phe-767. The Cytoplasmic segment spans residues Gln-768–His-796. The chain crosses the membrane as a helical span at residues Asp-797–Leu-817. At Asp-818–Phe-832 the chain is on the extracellular side.

The protein belongs to the SID1 family. In terms of assembly, interacts with adapter protein complex 1 (AP-1) and AP-2, but not AP-3 and AP-4. Interacts with LAMP2. Post-translationally, glycosylated. In terms of tissue distribution, highly expressed in the liver, brain, kidney and intestine (at protein level).

Its subcellular location is the lysosome membrane. It is found in the cell membrane. In terms of biological role, mediates the translocation of RNA and DNA across the lysosomal membrane during RNA and DNA autophagy (RDA), a process in which RNA or DNA is directly imported into lysosomes in an ATP-dependent manner, and degraded. Involved in the uptake of single-stranded oligonucleotides by living cells, a process called gymnosis. In vitro, mediates the uptake of linear DNA more efficiently than that of circular DNA, but exhibits similar uptake efficacy toward RNA and DNA. Binds long double-stranded RNA (dsRNA) (500 - 700 base pairs), but not dsRNA shorter than 100 bp. The sequence is that of SID1 transmembrane family member 2 (Sidt2) from Rattus norvegicus (Rat).